The chain runs to 429 residues: Phosphoribosylamine--glycine ligase (429 aa).

An ATP-grasp domain is found at 109 to 316 (KDFLARHQIP…LVELCLAAID (208 aa)). Residue 135–196 (VREQGAPIVV…EEFLDGEEAS (62 aa)) coordinates ATP. The interval 212–234 (SQDHKRVGDKDTGPNTGGMGAYS) is disordered. The span at 213 to 223 (QDHKRVGDKDT) shows a compositional bias: basic and acidic residues. 2 residues coordinate Mg(2+): Glu286 and Asn288.

It belongs to the GARS family. The cofactor is Mg(2+). Mn(2+) serves as cofactor.

It carries out the reaction 5-phospho-beta-D-ribosylamine + glycine + ATP = N(1)-(5-phospho-beta-D-ribosyl)glycinamide + ADP + phosphate + H(+). Its pathway is purine metabolism; IMP biosynthesis via de novo pathway; N(1)-(5-phospho-D-ribosyl)glycinamide from 5-phospho-alpha-D-ribose 1-diphosphate: step 2/2. This chain is Phosphoribosylamine--glycine ligase, found in Vibrio vulnificus (strain CMCP6).